The sequence spans 281 residues: Pantothenate synthetase (281 aa).

Position 26 to 33 (26 to 33 (MGNLHDGH)) interacts with ATP. H33 (proton donor) is an active-site residue. A (R)-pantoate-binding site is contributed by Q57. Q57 lines the beta-alanine pocket. 145–148 (GEKD) is a binding site for ATP. (R)-pantoate is bound at residue Q151. ATP is bound at residue 182-185 (MSSR).

This sequence belongs to the pantothenate synthetase family. Homodimer.

It localises to the cytoplasm. It carries out the reaction (R)-pantoate + beta-alanine + ATP = (R)-pantothenate + AMP + diphosphate + H(+). The protein operates within cofactor biosynthesis; (R)-pantothenate biosynthesis; (R)-pantothenate from (R)-pantoate and beta-alanine: step 1/1. Its function is as follows. Catalyzes the condensation of pantoate with beta-alanine in an ATP-dependent reaction via a pantoyl-adenylate intermediate. The chain is Pantothenate synthetase from Idiomarina loihiensis (strain ATCC BAA-735 / DSM 15497 / L2-TR).